A 910-amino-acid polypeptide reads, in one-letter code: Harmonin (910 aa).

An N-terminal domain region spans residues 1–86 (MDRKVAREFR…LTPRRSRKLK (86 aa)). PDZ domains follow at residues 87-171 (EVRL…GLIP) and 211-295 (KVFI…AGRE). The interval 194–833 (GVRGGLGSPG…KAWNQGGDWI (640 aa)) is mediates interaction with MYO7B. A Phosphoserine modification is found at Ser-219. Coiled coils occupy residues 299–377 (TDRE…WEED) and 417–482 (TIRK…DLEE). The disordered stretch occupies residues 563–688 (VMPHPPSVNS…PPRGPGVSTI (126 aa)). Over residues 564-582 (MPHPPSVNSPSKVPAPPVL) the composition is skewed to pro residues. Over residues 583-596 (PSSGHVSSSSSPWV) the composition is skewed to low complexity. Pro residues predominate over residues 599-611 (TPPPIPIPPPPSI). A compositionally biased stretch (polar residues) spans 650–664 (NTHSGKPSSSPTTER). A PDZ 3 domain is found at 752 to 839 (DVRLLRIKKE…GDWIDLVVAV (88 aa)). The segment at 890–910 (KSRERNQTDPSWRPASSAPSP) is disordered. A compositionally biased stretch (low complexity) spans 899-910 (PSWRPASSAPSP).

Part of the IMAC/intermicrovillar adhesion complex/intermicrovillar tip-link complex composed of ANKS4B, MYO7B, USH1C, CDHR2 and CDHR5. Part of a complex composed of USH1C, USH1G and MYO7A. Interacts with F-actin. Interacts with USH2A. Interacts with SLC4A7. Interacts (via PDZ1 domain) with the C-terminus of USHBP1. Interacts (via N-terminus and PDZ 2 domain) with CDH23. Interacts with USH1G. Interacts with MYO7B. Interacts with CDHR2 and CDHR5; may mediate their interaction with MYO7B at the microvilli tip. Interacts (via PDZ 1 domain) with ANKS4B. Interacts (via PDZ 1 domain) with DOCK4. As to expression, detected in stereocilia of cochlear hair cells (at protein level). Isoform 1 is expressed in the eye, cochlea, vestibule, heart, kidney, small intestine and testis; it is barely visible in skeletal muscle, liver, and lung and is absent from the brain. Isoforms 2 and 3 are expressed in the cochlea and vestibule.

Its subcellular location is the cytoplasm. It is found in the cytosol. The protein localises to the cytoskeleton. The protein resides in the cell projection. It localises to the microvillus. Anchoring/scaffolding protein that is a part of the functional network formed by USH1C, USH1G, CDH23 and MYO7A that mediates mechanotransduction in cochlear hair cells. Required for normal development and maintenance of cochlear hair cell bundles. As part of the intermicrovillar adhesion complex/IMAC plays a role in brush border differentiation, controlling microvilli organization and length. Probably plays a central regulatory role in the assembly of the complex, recruiting CDHR2, CDHR5 and MYO7B to the microvilli tips. The chain is Harmonin (Ush1c) from Mus musculus (Mouse).